Here is a 127-residue protein sequence, read N- to C-terminus: MAIWQGRSLKKPSGGRIVLARKKRKRELGREPSNTRVAEQDKRKIIRTYGGNRKVRLTAAAYANVFDKSGKGRKVRIIRVIENPANRQFARRNIITKGAIIETEIGKAKVTSRPGQDGVVNAILLEE.

This sequence belongs to the eukaryotic ribosomal protein eS8 family. As to quaternary structure, part of the 30S ribosomal subunit.

The chain is Small ribosomal subunit protein eS8 from Pyrococcus furiosus (strain ATCC 43587 / DSM 3638 / JCM 8422 / Vc1).